The chain runs to 431 residues: Probable prephenate dehydrogenase [NADP(+)] (431 aa).

5 to 34 (FQVGIIGFGDMGRLYAEYISKAGWRVNVCD) contributes to the NADP(+) binding site. Positions 5–285 (FQVGIIGFGD…GENMDRNSSG (281 aa)) constitute a Prephenate/arogenate dehydrogenase domain.

Belongs to the prephenate/arogenate dehydrogenase family.

It is found in the cytoplasm. It catalyses the reaction prephenate + NADP(+) = 3-(4-hydroxyphenyl)pyruvate + CO2 + NADPH. It participates in amino-acid biosynthesis; L-tyrosine biosynthesis; (4-hydroxyphenyl)pyruvate from prephenate (NADP(+) route): step 1/1. In Schizosaccharomyces pombe (strain 972 / ATCC 24843) (Fission yeast), this protein is Probable prephenate dehydrogenase [NADP(+)] (tyr1).